Here is a 165-residue protein sequence, read N- to C-terminus: MPRVALYPGSFDPVTNGHLDVVRHAVALCDRLIVAVGVHPGKTPVFSADDRLAMARSVFEPVAVEAGCAFDCVTYDDLTVAAAHKVGATILVRGLRDGTDLDYEMQIAGMNETMAPDVHTVFVPASPGVRPITATLVRQIATMGGDVSPFVPQLVASRLRTKFAG.

Ser10 lines the substrate pocket. ATP contacts are provided by residues 10-11 and His18; that span reads SF. Substrate contacts are provided by Lys42, Thr79, and Arg93. ATP contacts are provided by residues 94-96, Glu104, and 129-135; these read GLR and VRPITAT.

This sequence belongs to the bacterial CoaD family. Homohexamer. It depends on Mg(2+) as a cofactor.

Its subcellular location is the cytoplasm. It catalyses the reaction (R)-4'-phosphopantetheine + ATP + H(+) = 3'-dephospho-CoA + diphosphate. It functions in the pathway cofactor biosynthesis; coenzyme A biosynthesis; CoA from (R)-pantothenate: step 4/5. Reversibly transfers an adenylyl group from ATP to 4'-phosphopantetheine, yielding dephospho-CoA (dPCoA) and pyrophosphate. The polypeptide is Phosphopantetheine adenylyltransferase (Nitrobacter winogradskyi (strain ATCC 25391 / DSM 10237 / CIP 104748 / NCIMB 11846 / Nb-255)).